Reading from the N-terminus, the 1044-residue chain is MVSDLRSWKKGLQAVPLKPGVLKELGKNGQREALHKYRESTLNSGLNFKDVLKEKAELGEDADDKKVLVLSYPQYCRYRSIIARLRERPSSLLTDHVVLALGGIASLTNSTQILYCRDTFEHPTLVENESVCDEFAPNLKGRPRKKKLSISQRRDSQSGGARESNGVEGKTLVKMRADSKSGVSKPRNPSTGSCKRVQSENKPKGDGGDECRTDEQAFLVALYKYMKERKTPIERIPYLGFKQINLWTMFQAAQKLGGYEVITARRQWKNVYDELGGNPGSTSAATCTRRHYERLILPYERFTKGEEDKPLPPAKPRKQEGSVQESIIKAKMMPIKRPKDEQKTPRGDKDASAKVLELGMEDMEELQEKQNSQQLQAPTQTDRDPNSPLTEDDEGVLVIKDEDQPVLHNAYEHANGGLLPSLPQDGAQLKSEDCDAFPVAAVPLHHGHPLPNSHTSDQWKHGILEYKVPPSALANVEQSRPKEGQNQVVMVLPTLQQKPVTSPEIPPERVEPLKKEESCFNFNPLLYPRGNPGIMSPLAKKKMLSQVSGTGLLNNYPYGPPPPLVSRRLSSSGTEVSSAGQSSSQVSSSVETSIVIKRPSVIQHAQSFKSRGSEDRRSSTEGSQKDGCSEGEPVHHSQTLIREPYLKRVDPHSSMEKSAEMPRPGQAPSFLSEFYSSPHLHNLCRQTEHHLSKEQISKYLSRDVYTRDSETAQGFPPSQHPDNVGLNFSARLSQKEKGPPPERVTEEQPTDLSLPKSSPLKLPLSTSTLGGIPHAAIQQDIKNSPHFQAGNSQSSSVDYHPRACRVPPMTVSASKKVTESHSKVLEKTPNSRGEESMGFKIDEMSRPILSTKSSPQNICTARPLKRNIEDLENGPTEKKIRAVTPLHCSTQRDLPGKPRTPEADSESVKPAEPAVHINSYTSEGHKIPLHSHLFQGLYPGTFVSQVQDMCESLGSHVTPSYSHPLQYLKNQAVLSPLMPPFAIHSLMMQRQFLAANPAHMYRHQVGTSYGDILHPGLYPMSALHPQPAFSPPQLSSVHPSTKLS.

Disordered stretches follow at residues 143 to 211 (PRKK…GDEC), 301 to 350 (RFTK…GDKD), 363 to 392 (MEEL…LTED), 554 to 591 (NNYP…SSVE), 603 to 672 (QHAQ…SFLS), 733 to 767 (SQKE…LSTS), 811 to 835 (VSAS…RGEE), and 884 to 912 (TPLH…KPAE). Composition is skewed to basic and acidic residues over residues 197–211 (VQSE…GDEC), 301–310 (RFTKGEEDKP), and 337–350 (RPKD…GDKD). Residues 212–304 (RTDEQAFLVA…LILPYERFTK (93 aa)) enclose the ARID domain. Positions 369–380 (KQNSQQLQAPTQ) are enriched in polar residues. The span at 565-591 (VSRRLSSSGTEVSSAGQSSSQVSSSVE) shows a compositional bias: low complexity. Basic and acidic residues-rich tracts occupy residues 611–635 (RGSE…EPVH), 644–660 (PYLK…KSAE), and 733–746 (SQKE…RVTE). Residues 752–767 (LSLPKSSPLKLPLSTS) are compositionally biased toward low complexity. Basic and acidic residues-rich tracts occupy residues 816 to 826 (KVTESHSKVLE) and 894 to 909 (LPGK…ESVK).

This sequence belongs to the ARID5B family.

The protein resides in the nucleus. In terms of biological role, transcription coactivator that binds to the 5'-AATA[CT]-3' core sequence and plays a key role in adipogenesis and liver development. Required for adipogenesis: regulates triglyceride metabolism in adipocytes by regulating expression of adipogenic genes. This Danio rerio (Zebrafish) protein is AT-rich interactive domain-containing protein 5B (arid5b).